The primary structure comprises 884 residues: Alanine--tRNA ligase (884 aa).

Residues His562, His566, Cys674, and His678 each coordinate Zn(2+).

It belongs to the class-II aminoacyl-tRNA synthetase family. The cofactor is Zn(2+).

Its subcellular location is the cytoplasm. It carries out the reaction tRNA(Ala) + L-alanine + ATP = L-alanyl-tRNA(Ala) + AMP + diphosphate. Its function is as follows. Catalyzes the attachment of alanine to tRNA(Ala) in a two-step reaction: alanine is first activated by ATP to form Ala-AMP and then transferred to the acceptor end of tRNA(Ala). Also edits incorrectly charged Ser-tRNA(Ala) and Gly-tRNA(Ala) via its editing domain. This chain is Alanine--tRNA ligase, found in Rhizobium johnstonii (strain DSM 114642 / LMG 32736 / 3841) (Rhizobium leguminosarum bv. viciae).